The sequence spans 614 residues: UvrABC system protein C (614 aa).

The 79-residue stretch at 20 to 98 folds into the GIY-YIG domain; sequence TAPGVYRMYA…IKSLSPRYNV (79 aa). A UVR domain is found at 207-242; it reads DELTRELGEQMQAASEALEFEQAARLRDLISSLRSM.

The protein belongs to the UvrC family. In terms of assembly, interacts with UvrB in an incision complex.

The protein resides in the cytoplasm. The UvrABC repair system catalyzes the recognition and processing of DNA lesions. UvrC both incises the 5' and 3' sides of the lesion. The N-terminal half is responsible for the 3' incision and the C-terminal half is responsible for the 5' incision. The chain is UvrABC system protein C from Stenotrophomonas maltophilia (strain K279a).